A 195-amino-acid polypeptide reads, in one-letter code: Glutamyl-tRNA(Gln) amidotransferase subunit C, mitochondrial (195 aa).

The N-terminal 18 residues, 1 to 18 (MNLSTIGFQVIFKQRLRC), are a transit peptide targeting the mitochondrion.

It belongs to the GatC family. Subunit of the heterotrimeric GatCAB amidotransferase (AdT) complex, composed of A, B and C subunits.

It localises to the mitochondrion. It catalyses the reaction L-glutamyl-tRNA(Gln) + L-glutamine + ATP + H2O = L-glutaminyl-tRNA(Gln) + L-glutamate + ADP + phosphate + H(+). In terms of biological role, allows the formation of correctly charged Gln-tRNA(Gln) through the transamidation of misacylated Glu-tRNA(Gln) in the mitochondria. The reaction takes place in the presence of glutamine and ATP through an activated gamma-phospho-Glu-tRNA(Gln). This chain is Glutamyl-tRNA(Gln) amidotransferase subunit C, mitochondrial, found in Brugia malayi (Filarial nematode worm).